A 339-amino-acid polypeptide reads, in one-letter code: Dihydroorotate dehydrogenase (quinone) (339 aa).

FMN is bound by residues 62-66 and Thr86; that span reads AGMDK. Lys66 serves as a coordination point for substrate. A substrate-binding site is contributed by 111 to 115; sequence NRMGF. Asn139 and Asn172 together coordinate FMN. Residue Asn172 coordinates substrate. Ser175 (nucleophile) is an active-site residue. Residue Asn177 participates in substrate binding. FMN contacts are provided by Lys217 and Thr245. 246–247 contacts substrate; it reads NT. Residues Gly268, Gly297, and 318 to 319 contribute to the FMN site; that span reads YS.

It belongs to the dihydroorotate dehydrogenase family. Type 2 subfamily. In terms of assembly, monomer. The cofactor is FMN.

It localises to the cell membrane. The enzyme catalyses (S)-dihydroorotate + a quinone = orotate + a quinol. It functions in the pathway pyrimidine metabolism; UMP biosynthesis via de novo pathway; orotate from (S)-dihydroorotate (quinone route): step 1/1. Catalyzes the conversion of dihydroorotate to orotate with quinone as electron acceptor. The protein is Dihydroorotate dehydrogenase (quinone) of Shewanella pealeana (strain ATCC 700345 / ANG-SQ1).